Consider the following 299-residue polypeptide: tRNA dimethylallyltransferase (299 aa).

An ATP-binding site is contributed by 13–20; sequence GPTASGKT. 15–20 contributes to the substrate binding site; sequence TASGKT. The interaction with substrate tRNA stretch occupies residues 38–41; that stretch reads DSRQ.

The protein belongs to the IPP transferase family. In terms of assembly, monomer. Mg(2+) serves as cofactor.

The enzyme catalyses adenosine(37) in tRNA + dimethylallyl diphosphate = N(6)-dimethylallyladenosine(37) in tRNA + diphosphate. Catalyzes the transfer of a dimethylallyl group onto the adenine at position 37 in tRNAs that read codons beginning with uridine, leading to the formation of N6-(dimethylallyl)adenosine (i(6)A). The protein is tRNA dimethylallyltransferase of Prochlorococcus marinus subsp. pastoris (strain CCMP1986 / NIES-2087 / MED4).